The chain runs to 182 residues: Methyl-coenzyme M reductase operon protein C (182 aa).

As to quaternary structure, MCR is composed of three subunits: alpha, beta, and gamma. The function of proteins C and D is not known.

This chain is Methyl-coenzyme M reductase operon protein C (mcrC), found in Methanococcus voltae.